Reading from the N-terminus, the 167-residue chain is SsrA-binding protein (167 aa).

Residues 139–158 (QNHDKRDAAKERDWQRDKQR) show a composition bias toward basic and acidic residues. A disordered region spans residues 139–167 (QNHDKRDAAKERDWQRDKQRVMRRHNRDA).

The protein belongs to the SmpB family.

It is found in the cytoplasm. Functionally, required for rescue of stalled ribosomes mediated by trans-translation. Binds to transfer-messenger RNA (tmRNA), required for stable association of tmRNA with ribosomes. tmRNA and SmpB together mimic tRNA shape, replacing the anticodon stem-loop with SmpB. tmRNA is encoded by the ssrA gene; the 2 termini fold to resemble tRNA(Ala) and it encodes a 'tag peptide', a short internal open reading frame. During trans-translation Ala-aminoacylated tmRNA acts like a tRNA, entering the A-site of stalled ribosomes, displacing the stalled mRNA. The ribosome then switches to translate the ORF on the tmRNA; the nascent peptide is terminated with the 'tag peptide' encoded by the tmRNA and targeted for degradation. The ribosome is freed to recommence translation, which seems to be the essential function of trans-translation. The polypeptide is SsrA-binding protein (Xanthomonas oryzae pv. oryzae (strain PXO99A)).